The sequence spans 430 residues: Enolase (430 aa).

Glutamine 168 provides a ligand contact to (2R)-2-phosphoglycerate. Glutamate 210 functions as the Proton donor in the catalytic mechanism. 3 residues coordinate Mg(2+): aspartate 247, glutamate 288, and aspartate 315. (2R)-2-phosphoglycerate contacts are provided by lysine 340, arginine 369, serine 370, and lysine 391. Residue lysine 340 is the Proton acceptor of the active site.

This sequence belongs to the enolase family. Mg(2+) serves as cofactor.

Its subcellular location is the cytoplasm. The protein localises to the secreted. It is found in the cell surface. It carries out the reaction (2R)-2-phosphoglycerate = phosphoenolpyruvate + H2O. Its pathway is carbohydrate degradation; glycolysis; pyruvate from D-glyceraldehyde 3-phosphate: step 4/5. Its function is as follows. Catalyzes the reversible conversion of 2-phosphoglycerate (2-PG) into phosphoenolpyruvate (PEP). It is essential for the degradation of carbohydrates via glycolysis. The protein is Enolase of Rippkaea orientalis (strain PCC 8801 / RF-1) (Cyanothece sp. (strain PCC 8801)).